The primary structure comprises 204 residues: Phosphopantothenoylcysteine decarboxylase (204 aa).

Residues threonine 53 and 104–107 each bind FMN; that span reads DANT. Asparagine 140 serves as a coordination point for substrate. The active-site Proton donor is cysteine 173.

It belongs to the HFCD (homooligomeric flavin containing Cys decarboxylase) superfamily. Homotrimer. Requires FMN as cofactor.

The catalysed reaction is N-[(R)-4-phosphopantothenoyl]-L-cysteine + H(+) = (R)-4'-phosphopantetheine + CO2. The protein operates within cofactor biosynthesis; coenzyme A biosynthesis; CoA from (R)-pantothenate: step 3/5. Catalyzes the decarboxylation of the cysteine moiety of 4-phosphopantothenoylcysteine to form 4'-phosphopantotheine and this reaction forms part of the biosynthesis of coenzyme A. The protein is Phosphopantothenoylcysteine decarboxylase (Ppcdc) of Mus musculus (Mouse).